We begin with the raw amino-acid sequence, 472 residues long: Gamma-glutamylputrescine synthetase PuuA (472 aa).

In terms of domain architecture, GS beta-grasp spans 35 to 129 (PNTQYVDVLL…MLLTMVDEDG (95 aa)). Positions 136-472 (PRNVLNRLWQ…TEIEWMLKNA (337 aa)) constitute a GS catalytic domain.

The protein belongs to the glutamine synthetase family. In terms of assembly, dodecamer. The cofactor is Mg(2+). Mn(2+) is required as a cofactor.

The enzyme catalyses putrescine + L-glutamate + ATP = gamma-L-glutamylputrescine + ADP + phosphate + H(+). Its pathway is amine and polyamine degradation; putrescine degradation; 4-aminobutanoate from putrescine: step 1/4. Its function is as follows. Involved in the breakdown of putrescine. Catalyzes the ATP-dependent gamma-glutamylation of putrescine, producing gamma-L-glutamylputrescine. Absolutely essential to utilize putrescine as both nitrogen and carbon sources and to decrease the toxicity of putrescine, which can lead to inhibition of cell growth and protein synthesis. In vitro is also able to use several diamines, and spermidine and spermine, instead of putrescine, but with a much lower activity, and cannot catalyze the gamma-glutamylation of ornithine or GABA. This is Gamma-glutamylputrescine synthetase PuuA from Escherichia coli (strain K12).